We begin with the raw amino-acid sequence, 441 residues long: E3 ubiquitin-protein ligase APD1 (441 aa).

The next 2 helical transmembrane spans lie at S60–I80 and I305–C325. The segment at C390–R429 adopts an RING-type zinc-finger fold.

In terms of tissue distribution, expressed in the shoot apical meristems (SAM), root tips and inflorescences, and, at low levels, in floral buds and pollen.

It is found in the endomembrane system. The protein localises to the vacuole membrane. It carries out the reaction S-ubiquitinyl-[E2 ubiquitin-conjugating enzyme]-L-cysteine + [acceptor protein]-L-lysine = [E2 ubiquitin-conjugating enzyme]-L-cysteine + N(6)-ubiquitinyl-[acceptor protein]-L-lysine.. It participates in protein modification; protein ubiquitination. Involved in pollen mitosis II (PMII) regulation during male gametogenesis. The sequence is that of E3 ubiquitin-protein ligase APD1 from Arabidopsis thaliana (Mouse-ear cress).